Consider the following 468-residue polypeptide: Lipase 1 (468 aa).

The first 16 residues, 1 to 16 (MRGIAVFLAFISLIFA), serve as a signal peptide directing secretion. N-linked (GlcNAc...) asparagine glycosylation occurs at Asn-79. A disulfide bridge connects residues Cys-112 and Cys-285. Ser-196 functions as the Charge relay system in the catalytic mechanism. 2 N-linked (GlcNAc...) asparagine glycosylation sites follow: Asn-231 and Asn-319. Catalysis depends on charge relay system residues Asp-348 and His-381. Cys-364 and Cys-409 form a disulfide bridge. Residues Asn-417, Asn-422, and Asn-451 are each glycosylated (N-linked (GlcNAc...) asparagine).

The protein belongs to the AB hydrolase superfamily. Lipase family. Class Lip subfamily.

Its subcellular location is the secreted. The catalysed reaction is a triacylglycerol + H2O = a diacylglycerol + a fatty acid + H(+). Functionally, secreted lipase that is able to hydrolyze both the neutral triacylglycerols and the monopalmitate ester Tween 40, allowing the use of hydrolyzed products as carbon sources. Has broad lipolytic activity, which may be important for colonization and subsequent infection, therefore contributing to the persistence and virulence in human tissue. The chain is Lipase 1 from Candida albicans (strain SC5314 / ATCC MYA-2876) (Yeast).